We begin with the raw amino-acid sequence, 471 residues long: 8-amino-7-oxononanoate synthase (471 aa).

Arginine 40 lines the substrate pocket. 131 to 132 (GY) serves as a coordination point for pyridoxal 5'-phosphate. Histidine 156 is a substrate binding site. Pyridoxal 5'-phosphate is bound by residues serine 202, histidine 230, and threonine 258. Position 261 is an N6-(pyridoxal phosphate)lysine (lysine 261). Substrate is bound at residue threonine 377. A disordered region spans residues 409–471 (SEGQTRREAE…LGAARRETAA (63 aa)).

It belongs to the class-II pyridoxal-phosphate-dependent aminotransferase family. BioF subfamily. Homodimer. Requires pyridoxal 5'-phosphate as cofactor.

The enzyme catalyses 6-carboxyhexanoyl-[ACP] + L-alanine + H(+) = (8S)-8-amino-7-oxononanoate + holo-[ACP] + CO2. It functions in the pathway cofactor biosynthesis; biotin biosynthesis. Its function is as follows. Catalyzes the decarboxylative condensation of pimeloyl-[acyl-carrier protein] and L-alanine to produce 8-amino-7-oxononanoate (AON), [acyl-carrier protein], and carbon dioxide. The chain is 8-amino-7-oxononanoate synthase from Burkholderia ambifaria (strain ATCC BAA-244 / DSM 16087 / CCUG 44356 / LMG 19182 / AMMD) (Burkholderia cepacia (strain AMMD)).